The sequence spans 167 residues: Phospholipase A2 (167 aa).

Residues methionine 1–glycine 18 form the signal peptide. Residues tryptophan 19–arginine 33 constitute a propeptide that is removed on maturation. Ca(2+) contacts are provided by tryptophan 41, glycine 43, and glycine 45. Disulfide bonds link cysteine 42–cysteine 64, cysteine 63–cysteine 103, cysteine 70–cysteine 96, cysteine 94–cysteine 128, and cysteine 138–cysteine 146. An N-linked (GlcNAc...) asparagine glycan is attached at asparagine 46. The active site involves histidine 67. Position 68 (aspartate 68) interacts with Ca(2+). Aspartate 97 is an active-site residue.

It belongs to the phospholipase A2 family. Group III subfamily. Ca(2+) is required as a cofactor. In terms of processing, N-glycosylated; contains mannose, N-acetylglucosamine and fucose alphal-6 and/or alphal-3 linked to the innermost N-acetylglucosamine. Expressed by the venom gland.

It localises to the secreted. It catalyses the reaction a 1,2-diacyl-sn-glycero-3-phosphocholine + H2O = a 1-acyl-sn-glycero-3-phosphocholine + a fatty acid + H(+). Its function is as follows. In vivo, intraplantar injection in mice cause spontaneous pain behaviors and paw swelling. PLA2 catalyzes the calcium-dependent hydrolysis of the 2-acyl groups in 3-sn-phosphoglycerides. This Apis mellifera (Honeybee) protein is Phospholipase A2.